A 435-amino-acid chain; its full sequence is MTIKRLTTSTGERIAIVAGLRTPFAKQATAFHGVPAVDLGKIVVNELLQKHDVDPGIIDQLVFGQVVQMPEAPNIAREIVLGTGMNTRTDAYSVSRACATSFQSTVNVAESIMAGHVDVGIAGGADSSSVAPIGVSKKLARTLVDLTKARSLGQRLSLLSRLGLKDLLPVSPAVAEYSTGISMGQTAEQMAKTYQISRQDQDALAHRSHTLATKSWQEGKLAGEVMTVHAEPYKSFIDRDNCFRENSVLESYAKLKPVFDRKHGTVTAATSTPLTDGGAAILLMREGRAKELGYKPLGYIRSFGFAAIDVWQDMLMGPSYATPIALQRAGMNLADLDLIEMHEAFAAQALANMKMFGSTKFAQEQLGRDKAIGDIDMDKFNVMGGSLAYGHPFAATGARLITQTLNELNRRGGGVGLTTACAAGGLGAAMIVETD.

The active-site Acyl-thioester intermediate is C98. Active-site proton acceptor residues include H391 and C421.

This sequence belongs to the thiolase-like superfamily. Thiolase family. Heterotetramer of two alpha chains (FadJ) and two beta chains (FadI).

It is found in the cytoplasm. It carries out the reaction an acyl-CoA + acetyl-CoA = a 3-oxoacyl-CoA + CoA. Its pathway is lipid metabolism; fatty acid beta-oxidation. Functionally, catalyzes the final step of fatty acid oxidation in which acetyl-CoA is released and the CoA ester of a fatty acid two carbons shorter is formed. This is 3-ketoacyl-CoA thiolase from Colwellia psychrerythraea (strain 34H / ATCC BAA-681) (Vibrio psychroerythus).